The following is a 1582-amino-acid chain: SET-binding protein (1582 aa).

4 disordered regions span residues 1 to 76 (MEPR…WVAG), 124 to 246 (ITIK…KVPA), 278 to 416 (LLGS…KRQS), and 446 to 513 (SNSE…KLSE). Polar residues predominate over residues 18–27 (EFLQGSSSRS). Basic and acidic residues predominate over residues 57–74 (GSGRDVDCNSNADSEKWV). 2 stretches are compositionally biased toward polar residues: residues 126-141 (IKQSGDQKVSRTGKNS) and 213-229 (MEWSSNSDSGPATQNCF). Residues 278-298 (LLGSVVPSPSSHNSPATPSSS) are compositionally biased toward low complexity. A compositionally biased stretch (basic and acidic residues) spans 356–365 (ETTEGKREAY). Over residues 368-388 (DSAQEASPARQSISSVSNPEN) the composition is skewed to polar residues. Basic and acidic residues predominate over residues 450–465 (GSKKDPRVPKLGKMIE). A DNA-binding region (a.T hook 1) is located at residues 575–587 (KKKRGRPKKQPLL). Disordered regions lie at residues 595 to 617 (GTSTSPVSPISREFPGTKKRKRR) and 709 to 787 (RGTI…ASTE). A compositionally biased stretch (polar residues) spans 770-787 (LSTQLGGSNGNLSPASTE). N6-acetyllysine is present on Lys808. Polar residues predominate over residues 845 to 871 (SPVSESHSEETIPSDSGIGTDNNSTSD). The interval 845-880 (SPVSESHSEETIPSDSGIGTDNNSTSDQAEKSSESR) is disordered. The a.T hook 2 DNA-binding region spans 1007–1019 (KKKRGRPAKTNDT). 6 disordered regions span residues 1128–1155 (VGGATLSSSRLHKRKHKHKRKHKEDRIL), 1182–1215 (SGSDKELPLVSEKSKHKERQKHQHGEASHKVSKN), 1236–1265 (AKDKGDLSSEPVESCAKRYSGSGGDSTRSE), 1429–1461 (QRQSKTGNNFVKKRRGRPRKQPSQFDEDSRDQM), 1470–1489 (LPSKRGQKPSLSPLALEPAS), and 1507–1582 (EAPP…DVLP). Residues 1137 to 1150 (RLHKRKHKHKRKHK) are compositionally biased toward basic residues. The span at 1182-1196 (SGSDKELPLVSEKSK) shows a compositional bias: basic and acidic residues. Residues 1439 to 1448 (VKKRRGRPRK) are compositionally biased toward basic residues. Positions 1440 to 1452 (KKRRGRPRKQPSQ) form a DNA-binding region, a.T hook 3. Composition is skewed to pro residues over residues 1509–1533 (PPLPPPPPPPLPPPPPPPPPPPPLP) and 1546–1559 (QPPAQPAQPTPQPL).

Interacts with SET.

It is found in the nucleus. The polypeptide is SET-binding protein (Setbp1) (Mus musculus (Mouse)).